A 157-amino-acid polypeptide reads, in one-letter code: Dihydrofolate reductase type 1 (157 aa).

A DHFR domain is found at 2–156; sequence KLSLMVAISK…INYSYQIWQK (155 aa).

This sequence belongs to the dihydrofolate reductase family. Homodimer.

The catalysed reaction is (6S)-5,6,7,8-tetrahydrofolate + NADP(+) = 7,8-dihydrofolate + NADPH + H(+). The protein operates within cofactor biosynthesis; tetrahydrofolate biosynthesis; 5,6,7,8-tetrahydrofolate from 7,8-dihydrofolate: step 1/1. Its function is as follows. Key enzyme in folate metabolism. Catalyzes an essential reaction for de novo glycine and purine synthesis, and for DNA precursor synthesis. In Escherichia coli, this protein is Dihydrofolate reductase type 1 (dhfrI).